The following is a 310-amino-acid chain: 4-hydroxyproline 2-epimerase (310 aa).

Cys-88 acts as the Proton acceptor in catalysis. Residues 89 to 90 (GH), His-208, and Asp-232 each bind substrate. The active-site Proton donor is the Cys-236. 237–238 (GT) lines the substrate pocket.

Belongs to the proline racemase family.

The catalysed reaction is trans-4-hydroxy-L-proline = cis-4-hydroxy-D-proline. Functionally, catalyzes the epimerization of trans-4-hydroxy-L-proline (t4LHyp) to cis-4-hydroxy-D-proline (c4DHyp). Is likely involved in a degradation pathway that converts t4LHyp to alpha-ketoglutarate. Displays no proline racemase activity. This chain is 4-hydroxyproline 2-epimerase, found in Pseudomonas fluorescens (strain ATCC BAA-477 / NRRL B-23932 / Pf-5).